The primary structure comprises 99 residues: Nucleoid-associated protein SPy_1862/M5005_Spy1580 (99 aa).

Belongs to the YbaB/EbfC family. In terms of assembly, homodimer.

Its subcellular location is the cytoplasm. It localises to the nucleoid. In terms of biological role, binds to DNA and alters its conformation. May be involved in regulation of gene expression, nucleoid organization and DNA protection. In Streptococcus pyogenes serotype M1, this protein is Nucleoid-associated protein SPy_1862/M5005_Spy1580.